Here is a 57-residue protein sequence, read N- to C-terminus: Large ribosomal subunit protein bL32 (57 aa).

Residues 1-21 (MAVPKRRTSKKVKNQRRTHKK) form a disordered region.

This sequence belongs to the bacterial ribosomal protein bL32 family.

This chain is Large ribosomal subunit protein bL32, found in Oceanobacillus iheyensis (strain DSM 14371 / CIP 107618 / JCM 11309 / KCTC 3954 / HTE831).